A 286-amino-acid chain; its full sequence is MEDLNVVDSINGAGSWLVANQALLLSYAVNIVAALAIIIVGLIIARMISNAVNRLMISRKIDATVADFLSALVRYGIIAFTLIAALGRVGVQTASVIAVLGAAGLAVGLALQGSLSNLAAGVLLVMFRPFRAGEYVDLGGVAGTVLSVQIFSTTMRTADGKIIVIPNGKIIAGNIINFSREPVRRNEFIIGVAYDSDIDQVKQILTNIIQSEDRILKDREMTVRLNELGASSINFVVRVWSNSGDLQNVYWDVLERIKREFDAAGISFPYPQMDVNFKRVKEDKAA.

Residues 1 to 30 (MEDLNVVDSINGAGSWLVANQALLLSYAVN) lie on the Periplasmic side of the membrane. A helical transmembrane segment spans residues 31–52 (IVAALAIIIVGLIIARMISNAV). Topologically, residues 53-67 (NRLMISRKIDATVAD) are cytoplasmic. The helical transmembrane segment at 68–88 (FLSALVRYGIIAFTLIAALGR) threads the bilayer. Topologically, residues 89–90 (VG) are periplasmic. A helical transmembrane segment spans residues 91 to 111 (VQTASVIAVLGAAGLAVGLAL). Residues 112 to 286 (QGSLSNLAAG…FKRVKEDKAA (175 aa)) are Cytoplasmic-facing.

The protein belongs to the MscS (TC 1.A.23) family. Homoheptamer.

The protein resides in the cell inner membrane. In terms of biological role, mechanosensitive channel that participates in the regulation of osmotic pressure changes within the cell, opening in response to stretch forces in the membrane lipid bilayer, without the need for other proteins. Contributes to normal resistance to hypoosmotic shock. Forms an ion channel of 1.0 nanosiemens conductance with a slight preference for anions. The channel is sensitive to voltage; as the membrane is depolarized, less tension is required to open the channel and vice versa. The channel is characterized by short bursts of activity that last for a few seconds. The sequence is that of Small-conductance mechanosensitive channel (mscS) from Escherichia coli O157:H7.